The primary structure comprises 322 residues: Putative DNA-directed RNA polymerase subunit alpha-like 2 (322 aa).

Residues methionine 1–glutamate 232 are alpha N-terminal domain (alpha-NTD). Residues glutamate 280–phenylalanine 322 form an alpha C-terminal domain (alpha-CTD) region.

Belongs to the RNA polymerase alpha chain family. In terms of assembly, in plastids the minimal PEP RNA polymerase catalytic core is composed of four subunits: alpha, beta, beta', and beta''. When a (nuclear-encoded) sigma factor is associated with the core the holoenzyme is formed, which can initiate transcription.

The protein localises to the plastid. It is found in the chloroplast. The catalysed reaction is RNA(n) + a ribonucleoside 5'-triphosphate = RNA(n+1) + diphosphate. In terms of biological role, DNA-dependent RNA polymerase catalyzes the transcription of DNA into RNA using the four ribonucleoside triphosphates as substrates. The protein is Putative DNA-directed RNA polymerase subunit alpha-like 2 (rpoAL2-A) of Pelargonium hortorum (Common geranium).